The chain runs to 73 residues: uncharacterized protein (73 aa).

Post-translationally, N-glycosylated.

This is an uncharacterized protein from Saccharomyces cerevisiae (strain ATCC 204508 / S288c) (Baker's yeast).